We begin with the raw amino-acid sequence, 229 residues long: Ribonuclease 3 (229 aa).

The RNase III domain maps to 5–127 (LAGLERKLGY…LIGAIYLDAD (123 aa)). Glutamate 40 provides a ligand contact to Mg(2+). Aspartate 44 is an active-site residue. Mg(2+) contacts are provided by aspartate 113 and glutamate 116. Glutamate 116 is an active-site residue. Residues 154-224 (DPKTRLQEFL…AASALIALGV (71 aa)) form the DRBM domain.

It belongs to the ribonuclease III family. In terms of assembly, homodimer. Requires Mg(2+) as cofactor.

It is found in the cytoplasm. It catalyses the reaction Endonucleolytic cleavage to 5'-phosphomonoester.. Functionally, digests double-stranded RNA. Involved in the processing of primary rRNA transcript to yield the immediate precursors to the large and small rRNAs (23S and 16S). Processes some mRNAs, and tRNAs when they are encoded in the rRNA operon. Processes pre-crRNA and tracrRNA of type II CRISPR loci if present in the organism. In Pseudomonas putida (strain ATCC 700007 / DSM 6899 / JCM 31910 / BCRC 17059 / LMG 24140 / F1), this protein is Ribonuclease 3.